The sequence spans 509 residues: Pyruvate kinase (509 aa).

Ser-29 carries the post-translational modification Phosphoserine. Residue Arg-56 participates in substrate binding. Positions 58 and 60 each coordinate K(+). 58–61 serves as a coordination point for ATP; it reads NFSH. Ser-63 is modified (phosphoserine). K(+)-binding residues include Asp-91 and Thr-92. Residues Arg-98 and Lys-184 each coordinate ATP. Glu-249 contacts Mg(2+). Substrate is bound by residues Gly-272 and Asp-273. Residue Asp-273 participates in Mg(2+) binding. Ser-281 bears the Phosphoserine mark. Residue Thr-305 participates in substrate binding. Residue Ser-412 is modified to Phosphoserine.

The protein belongs to the pyruvate kinase family. Homotetramer. Requires Mg(2+) as cofactor. K(+) is required as a cofactor.

It carries out the reaction pyruvate + ATP = phosphoenolpyruvate + ADP + H(+). The protein operates within carbohydrate degradation; glycolysis; pyruvate from D-glyceraldehyde 3-phosphate: step 5/5. The sequence is that of Pyruvate kinase (pyk1) from Schizosaccharomyces pombe (strain 972 / ATCC 24843) (Fission yeast).